We begin with the raw amino-acid sequence, 374 residues long: Aclacinomycin 10-hydroxylase RdmB (374 aa).

S-adenosyl-L-methionine contacts are provided by Tyr-171, Gly-190, Glu-213, Asp-240, Phe-241, and Ser-255.

The protein belongs to the class I-like SAM-binding methyltransferase superfamily. Cation-independent O-methyltransferase family. Homodimer. Homotetramer in solution. Tetramers might not be very stable in solution.

It catalyses the reaction 15-demethylaclacinomycin T + AH2 + O2 = 10-decarboxymethylaclacinomycin T + A + CO2 + H2O. The catalysed reaction is 10-carboxy-13-deoxycarminomycin + AH2 + O2 + H(+) = 10-hydroxy-13-deoxycarminomycin + A + CO2 + H2O. The enzyme catalyses 10-hydroxy-13-deoxycarminomycin + S-adenosyl-L-methionine = 10-hydroxy-13-deoxydaunorubicin + S-adenosyl-L-homocysteine + H(+). It participates in antibiotic biosynthesis; rhodomycin biosynthesis. Its pathway is antibiotic biosynthesis; aclacinomycin biosynthesis. With respect to regulation, the hydroxylation reaction requires S-adenosyl-L-methionine (SAM) as a cofactor. S-adenosine-L-homocysteine and sinefungin (a SAM analog) can also support the decarboxylative hydroxylation activity with 10-carboxy-13-deoxycarminomycin as substrate. SAM and its analogs are considered an essential structural ligand to maintain ternary structural integrity and the proper binding mode and orientation of electron-rich substrates during decarboxylative hydroxylation of C-10 by RdmB. In terms of biological role, involved in the biosynthesis of anthracyclines, an important group of aromatic polyketide antibiotics used in cancer chemotherapy. Acts as a 10-hydroxylase to catalyze a decarboxylative hydroxylation reaction on anthracyclines. During biosynthesis of rhodomycin, it catalyzes the removal of the carboxylic group at the C-10 position of 15-demethoxy-epsilon-rhodomycin coupled to hydroxylation at the same C-10 position to yield beta-rhodomycin. In vitro, can also catalyze the removal of the carboxylic group at the C-10 position of 15-demethoxyaclacinomycin T coupled to hydroxylation at the same C-10 position to yield 10-decarboxymethylaclacinomycin T. It can also use 10-carboxy-13-deoxycarminomycin, an analog of 15-demethoxy-epsilon-rhodomycin, to yield 10-hydroxy-13-deoxycarminomycin. Functionally, in addition to its hydroxylation activity, it can act in vitro as a S-adenosyl-L-methionine-dependent O-methyltransferase and catalyze the 4-O-methylation of 10-hydroxy-13-deoxycarminomycin to 10-hydroxy-13-deoxydaunorubicin. The triglycosyl group of anthracyclines prevents the methylation reaction. The protein is Aclacinomycin 10-hydroxylase RdmB of Streptomyces purpurascens.